Consider the following 166-residue polypeptide: Putative universal stress protein SE_1385 (166 aa).

It belongs to the universal stress protein A family.

It is found in the cytoplasm. This chain is Putative universal stress protein SE_1385, found in Staphylococcus epidermidis (strain ATCC 12228 / FDA PCI 1200).